The sequence spans 459 residues: F-box protein At1g47340 (459 aa).

The F-box domain maps to 31-76; it reads FMVSVSLPKELILEILKRLPAKSVKRFHCVSKQWASMLSCPHFREL. Residues 434-459 are disordered; sequence AKIEWEEEEEEDEDEDQEKEEEDQWS. A compositionally biased stretch (acidic residues) spans 438–459; the sequence is WEEEEEEDEDEDQEKEEEDQWS.

In Arabidopsis thaliana (Mouse-ear cress), this protein is F-box protein At1g47340.